Reading from the N-terminus, the 255-residue chain is Trans-aconitate 2-methyltransferase (255 aa).

Belongs to the methyltransferase superfamily. Tam family.

Its subcellular location is the cytoplasm. It catalyses the reaction trans-aconitate + S-adenosyl-L-methionine = (E)-3-(methoxycarbonyl)pent-2-enedioate + S-adenosyl-L-homocysteine. In terms of biological role, catalyzes the S-adenosylmethionine monomethyl esterification of trans-aconitate. In Mycolicibacterium gilvum (strain PYR-GCK) (Mycobacterium gilvum (strain PYR-GCK)), this protein is Trans-aconitate 2-methyltransferase.